We begin with the raw amino-acid sequence, 399 residues long: uncharacterized protein (399 aa).

11 consecutive transmembrane segments (helical) span residues 19 to 39 (IFSI…PLFV), 46 to 66 (VNLL…LLMY), 91 to 111 (FYTI…PILG), 123 to 143 (QFEQ…IIAS), 146 to 166 (IYAK…IFIA), 183 to 203 (LLSA…ISYI), 225 to 247 (VAIL…MPIW), 283 to 303 (VLLL…LLGF), 307 to 327 (FGLD…FAYL), 335 to 355 (LFSI…YLGY), and 369 to 389 (IEYT…VYLL).

The protein resides in the host membrane. Its function is as follows. Putative amino acid transporter. This is an uncharacterized protein from Saccharolobus islandicus (Sulfolobus islandicus).